The following is a 122-amino-acid chain: uncharacterized protein (122 aa).

Positions 1-28 are cleaved as a signal peptide; sequence MVPGPPESVVRFFLWFCFLLPPTRKASC. A glycan (N-linked (GlcNAc...) asparagine) is linked at Asn49.

It localises to the secreted. This is an uncharacterized protein from Homo sapiens (Human).